A 224-amino-acid polypeptide reads, in one-letter code: Ribose-5-phosphate isomerase A 2 (224 aa).

Residues 27-30 (SGST), 83-86 (DGTD), and 96-99 (KGGG) contribute to the substrate site. Glutamate 105 acts as the Proton acceptor in catalysis. Residue lysine 123 participates in substrate binding.

The protein belongs to the ribose 5-phosphate isomerase family. Homodimer.

It catalyses the reaction aldehydo-D-ribose 5-phosphate = D-ribulose 5-phosphate. It participates in carbohydrate degradation; pentose phosphate pathway; D-ribose 5-phosphate from D-ribulose 5-phosphate (non-oxidative stage): step 1/1. Functionally, catalyzes the reversible conversion of ribose-5-phosphate to ribulose 5-phosphate. The protein is Ribose-5-phosphate isomerase A 2 of Oceanobacillus iheyensis (strain DSM 14371 / CIP 107618 / JCM 11309 / KCTC 3954 / HTE831).